Here is a 613-residue protein sequence, read N- to C-terminus: UvrABC system protein C (613 aa).

Positions 12–89 (DHPGVYIMHD…IKQHRPRYNV (78 aa)) constitute a GIY-YIG domain. Residues 199–234 (TALVKELKEQMEAAAARLEFEKAARLRDQLRAVQEV) enclose the UVR domain.

The protein belongs to the UvrC family. As to quaternary structure, interacts with UvrB in an incision complex.

Its subcellular location is the cytoplasm. In terms of biological role, the UvrABC repair system catalyzes the recognition and processing of DNA lesions. UvrC both incises the 5' and 3' sides of the lesion. The N-terminal half is responsible for the 3' incision and the C-terminal half is responsible for the 5' incision. The chain is UvrABC system protein C from Moorella thermoacetica (strain ATCC 39073 / JCM 9320).